Here is a 108-residue protein sequence, read N- to C-terminus: ATP-dependent Clp protease adapter protein ClpS (108 aa).

The protein belongs to the ClpS family. In terms of assembly, binds to the N-terminal domain of the chaperone ClpA.

Its function is as follows. Involved in the modulation of the specificity of the ClpAP-mediated ATP-dependent protein degradation. This Ralstonia nicotianae (strain ATCC BAA-1114 / GMI1000) (Ralstonia solanacearum) protein is ATP-dependent Clp protease adapter protein ClpS.